We begin with the raw amino-acid sequence, 3432 residues long: Genome polyprotein (3432 aa).

The tract at residues 2–15 (TKKPGGPGKNRAIN) is interaction with host EXOC1. At 2–109 (TKKPGGPGKN…RKQNKRGGNE (108 aa)) the chain is on the cytoplasmic side. The interval 37-72 (LLDGRGPVRFVLALITFFKFTALAPTKALLGRWKAV) is hydrophobic; homodimerization of capsid protein C. Residues 106 to 127 (GGNEGSIMWLASLAVVIACAGA) constitute a propeptide, ER anchor for the capsid protein C, removed in mature form by serine protease NS3. Residues 110 to 130 (GSIMWLASLAVVIACAGAMKL) form a helical membrane-spanning segment. Over 131-253 (SNFQGKLLMT…ATRYLMKTEN (123 aa)) the chain is Extracellular. An N-linked (GlcNAc...) asparagine; by host glycan is attached at N142. The chain crosses the membrane as a helical span at residues 254–274 (WIIRNPGYAFLAAVLGWMLGS). The Cytoplasmic segment spans residues 275–279 (NNGQR). A helical membrane pass occupies residues 280–294 (VVFTILLLLVAPAYS). Over 295–746 (FNCLGMGNRD…QVFGGAFRTL (452 aa)) the chain is Extracellular. Intrachain disulfides connect C297-C324, C354-C410, C354-C415, C368-C399, C386-C410, and C386-C415. The interval 392–405 (DRGWGNGCGLFGKG) is fusion peptide. The N-linked (GlcNAc...) asparagine; by host glycan is linked to N448. Disulfide bonds link C484-C581 and C598-C629. A helical transmembrane segment spans residues 747–767 (FGGMSWITQGLMGALLLWMGV). Residues 768-773 (NARDRS) are Cytoplasmic-facing. The chain crosses the membrane as a helical span at residues 774–794 (IALAFLATGGVLVFLATNVHA). Topologically, residues 795–1219 (DTGCAIDITR…AFAEANSGGD (425 aa)) are extracellular. Cystine bridges form between C798–C809, C849–C937, C973–C1017, C1074–C1123, C1085–C1106, and C1107–C1110. N-linked (GlcNAc...) asparagine; by host glycosylation is found at N924 and N1001. Residues 1220–1240 (VLHLALIAVFKIQPAFLVMNM) form a helical membrane-spanning segment. Topologically, residues 1241 to 1250 (LSTRWTNQEN) are cytoplasmic. Residues 1251-1271 (VILVLGAAFFQLASVDLQIGV) form a helical membrane-spanning segment. Residue H1272 is a topological domain, lumenal. A helical transmembrane segment spans residues 1273–1293 (GILNAAAIAWMIVRAITFPTT). Over 1294–1309 (SSVTMPVLALLTPGMR) the chain is Cytoplasmic. Residues 1310–1330 (ALYLDTYRIILLVIGICSLLH) form a helical membrane-spanning segment. Topologically, residues 1331–1341 (ERKKTMAKKKG) are lumenal. A helical membrane pass occupies residues 1342–1362 (AVLLGLALTSTGWFSPTTIAA). The Cytoplasmic portion of the chain corresponds to 1363-1374 (GLMVCNPNKKRG). Interaction with human SPCS1 stretches follow at residues 1374–1423 (GWPA…GKAT) and 1458–1505 (FHLI…TKRG). Residues 1375–1395 (WPATEFLSAVGLMFAIVGGLA) traverse the membrane as a helical segment. Residues 1396–1398 (ELD) lie on the Lumenal side of the membrane. A helical membrane pass occupies residues 1399–1419 (IESMSIPFMLAGLMAVSYVVS). Residues 1420 to 1476 (GKATDMWLERAADISWEMDAAITGSSRRLDVKLDDDGDFHLIDDPGVPWKVWVLRMS) lie on the Cytoplasmic side of the membrane. An interacts with and activates NS3 protease region spans residues 1427–1466 (LERAADISWEMDAAITGSSRRLDVKLDDDGDFHLIDDPGV). The segment at residues 1477–1497 (CIGLAALTPWAIVPAAFGYWL) is an intramembrane region (helical). At 1498–2173 (TLKTTKRGGV…RMALEELPDA (676 aa)) the chain is on the cytoplasmic side. The Peptidase S7 domain occupies 1505-1682 (GGVFWDTPSP…DRQEEPVPEA (178 aa)). Residues H1555, D1579, and S1639 each act as charge relay system; for serine protease NS3 activity in the active site. The 157-residue stretch at 1685–1841 (PNMLRKRQMT…DSNAPIHDLQ (157 aa)) folds into the Helicase ATP-binding domain. The segment at 1689-1692 (RKRQ) is important for RNA-binding. Residue 1698–1705 (LHPGSGKT) coordinates ATP. Residues 1789–1792 (DEAH) carry the DEAH box motif. The 166-residue stretch at 1852-2017 (GYEWITEYAG…GLVAQLYGPE (166 aa)) folds into the Helicase C-terminal domain. K1893 carries the N6-acetyllysine; by host modification. The disordered stretch occupies residues 1950 to 1972 (NPSPITSASAAQRRGRVGRNPNQ). Residues 2168 to 2172 (EELPD) are regulates the ATPase activity of NS3 helicase. The chain crosses the membrane as a helical span at residues 2174-2194 (LETITLIVAITVMTGGFFLLM). Topologically, residues 2195–2199 (MQRKG) are lumenal. Residues 2200-2220 (IGKMGLGALVLTLATFFLWAA) constitute an intramembrane region (helical). Position 2221 (E2221) is a topological domain, lumenal. The helical transmembrane segment at 2222-2242 (VPGTKIAGTLLIALLLMVVLI) threads the bilayer. Residues 2243–2257 (PEPEKQRSQTDNQLA) lie on the Cytoplasmic side of the membrane. A helical membrane pass occupies residues 2258-2278 (VFLICVLTVVGVVAANEYGML). Over 2279 to 2311 (EKTKADLKSMFGGKTQASGLTGLPSMALDLRPA) the chain is Lumenal. The segment at residues 2312-2332 (TAWALYGGSTVVLTPLLKHLI) is an intramembrane region (helical). Residues 2333-2368 (TSEYVTTSLASINSQAGSLFVLPRGVPFTDLDLTVG) are Lumenal-facing. Residues 2369–2389 (LVFLGCWGQITLTTFLTAMVL) traverse the membrane as a helical segment. Residues 2390–2444 (ATLHYGYMLPGWQAEALRAAQRRTAAGIMKNAVVDGMVATDVPELERTTPLMQKK) lie on the Cytoplasmic side of the membrane. The helical transmembrane segment at 2445-2465 (VGQVLLIGVSVAAFLVNPNVT) threads the bilayer. Residues 2466-2469 (TVRE) lie on the Lumenal side of the membrane. The helical transmembrane segment at 2470–2490 (AGVLVTAATLTLWDNGASAVW) threads the bilayer. Residues 2491-3432 (NSTTATGLCH…DVLIQEDRVI (942 aa)) lie on the Cytoplasmic side of the membrane. One can recognise an mRNA cap 0-1 NS5-type MT domain in the interval 2528–2793 (GRPGGRTLGE…DVNLGSGTRA (266 aa)). S2583 contacts S-adenosyl-L-methionine. Phosphoserine is present on S2583. Catalysis depends on K2588, which acts as the For 2'-O-MTase activity. Residues G2613, W2614, T2631, K2632, D2658, and V2659 each coordinate S-adenosyl-L-methionine. D2673 serves as the catalytic For 2'-O-MTase activity. I2674 contacts S-adenosyl-L-methionine. Residues K2709 and E2745 each act as for 2'-O-MTase activity in the active site. S-adenosyl-L-methionine is bound at residue Y2747. Zn(2+) is bound by residues E2967, H2971, C2976, and C2979. The region spanning 3057–3209 (GKMYADDTAG…KPLDDRFATA (153 aa)) is the RdRp catalytic domain. The Zn(2+) site is built by H3244, C3260, and C3379.

The protein in the N-terminal section; belongs to the class I-like SAM-binding methyltransferase superfamily. mRNA cap 0-1 NS5-type methyltransferase family. As to quaternary structure, homodimer. Interacts (via N-terminus) with host EXOC1 (via C-terminus); this interaction results in EXOC1 degradation through the proteasome degradation pathway. In terms of assembly, forms heterodimers with envelope protein E in the endoplasmic reticulum and Golgi. Homodimer; in the endoplasmic reticulum and Golgi. Interacts with protein prM. Interacts with non-structural protein 1. Interacts with host HSPA5. As to quaternary structure, homodimer; Homohexamer when secreted. Interacts with envelope protein E. NS1 interacts with NS4B. Interacts with host complement protein CFH; this interaction leads to the degradation of C3. In terms of assembly, interacts (via N-terminus) with serine protease NS3. Forms a heterodimer with serine protease NS3. May form homooligomers. Interacts with human SPCS1. As to quaternary structure, forms a heterodimer with NS2B. Interacts with non-structural protein 2A (via N-terminus). Interacts with NS4B. Interacts with unphosphorylated RNA-directed RNA polymerase NS5; this interaction stimulates RNA-directed RNA polymerase NS5 guanylyltransferase activity. Interacts with host ILF2. In terms of assembly, interacts with serine protease NS3. Homodimer. Interacts with host STAT2; this interaction inhibits the phosphorylation of the latter, and, when all viral proteins are present (polyprotein), targets STAT2 for degradation. Interacts with serine protease NS3. Mn(2+) is required as a cofactor. Mg(2+) serves as cofactor. In terms of processing, specific enzymatic cleavages in vivo yield mature proteins. Cleavages in the lumen of endoplasmic reticulum are performed by host signal peptidase, whereas cleavages in the cytoplasmic side are performed by serine protease NS3. Signal cleavage at the 2K-4B site requires a prior NS3 protease-mediated cleavage at the 4A-2K site. Cleaved in post-Golgi vesicles by a host furin, releasing the mature small envelope protein M, and peptide pr. This cleavage is incomplete as up to 30% of viral particles still carry uncleaved prM. Post-translationally, N-glycosylated. In terms of processing, N-glycosylated. The excreted form is glycosylated and this is required for efficient secretion of the protein from infected cells. Acetylated by host KAT5. Acetylation modulates NS3 RNA-binding and unwinding activities and plays an important positive role for viral replication. Post-translationally, phosphorylated on serines residues. This phosphorylation may trigger NS5 nuclear localization.

The protein resides in the host endoplasmic reticulum membrane. Its subcellular location is the virion. The protein localises to the host nucleus. It localises to the host cytoplasm. It is found in the host perinuclear region. The protein resides in the secreted. Its subcellular location is the virion membrane. The protein localises to the host cell surface. It carries out the reaction Selective hydrolysis of -Xaa-Xaa-|-Yaa- bonds in which each of the Xaa can be either Arg or Lys and Yaa can be either Ser or Ala.. It catalyses the reaction RNA(n) + a ribonucleoside 5'-triphosphate = RNA(n+1) + diphosphate. The enzyme catalyses a ribonucleoside 5'-triphosphate + H2O = a ribonucleoside 5'-diphosphate + phosphate + H(+). The catalysed reaction is ATP + H2O = ADP + phosphate + H(+). It carries out the reaction a 5'-end (5'-triphosphoguanosine)-ribonucleoside in mRNA + S-adenosyl-L-methionine = a 5'-end (N(7)-methyl 5'-triphosphoguanosine)-ribonucleoside in mRNA + S-adenosyl-L-homocysteine. It catalyses the reaction a 5'-end (N(7)-methyl 5'-triphosphoguanosine)-ribonucleoside in mRNA + S-adenosyl-L-methionine = a 5'-end (N(7)-methyl 5'-triphosphoguanosine)-(2'-O-methyl-ribonucleoside) in mRNA + S-adenosyl-L-homocysteine + H(+). Plays a role in virus budding by binding to the cell membrane and gathering the viral RNA into a nucleocapsid that forms the core of a mature virus particle. During virus entry, may induce genome penetration into the host cytoplasm after hemifusion induced by the surface proteins. Can migrate to the cell nucleus where it modulates host functions. Overcomes the anti-viral effects of host EXOC1 by sequestering and degrading the latter through the proteasome degradation pathway. Functionally, inhibits RNA silencing by interfering with host Dicer. In terms of biological role, prevents premature fusion activity of envelope proteins in trans-Golgi by binding to envelope protein E at pH 6.0. After virion release in extracellular space, gets dissociated from E dimers. Its function is as follows. Acts as a chaperone for envelope protein E during intracellular virion assembly by masking and inactivating envelope protein E fusion peptide. prM is the only viral peptide matured by host furin in the trans-Golgi network probably to avoid catastrophic activation of the viral fusion activity in acidic Golgi compartment prior to virion release. prM-E cleavage is inefficient, and many virions are only partially matured. These uncleaved prM would play a role in immune evasion. May play a role in virus budding. Exerts cytotoxic effects by activating a mitochondrial apoptotic pathway through M ectodomain. May display a viroporin activity. Functionally, binds to host cell surface receptor and mediates fusion between viral and cellular membranes. Efficient virus attachment to cell is, at least in part, mediated by host HSPA5. Envelope protein is synthesized in the endoplasmic reticulum in the form of heterodimer with protein prM. They play a role in virion budding in the ER, and the newly formed immature particle is covered with 60 spikes composed of heterodimer between precursor prM and envelope protein E. The virion is transported to the Golgi apparatus where the low pH causes dissociation of PrM-E heterodimers and formation of E homodimers. prM-E cleavage is inefficient, and many virions are only partially matured. These uncleaved prM would play a role in immune evasion. In terms of biological role, involved in immune evasion, pathogenesis and viral replication. Once cleaved off the polyprotein, is targeted to three destinations: the viral replication cycle, the plasma membrane and the extracellular compartment. Essential for viral replication. Required for formation of the replication complex and recruitment of other non-structural proteins to the ER-derived membrane structures. Excreted as a hexameric lipoparticle that plays a role against host immune response. Antagonizing the complement function. Binds to the host macrophages and dendritic cells. Inhibits signal transduction originating from Toll-like receptor 3 (TLR3). Its function is as follows. Component of the viral RNA replication complex that functions in virion assembly and antagonizes the host alpha/beta interferon antiviral response. Required cofactor for the serine protease function of NS3. May have membrane-destabilizing activity and form viroporins. Functionally, displays three enzymatic activities: serine protease, NTPase and RNA helicase. NS3 serine protease, in association with NS2B, performs its autocleavage and cleaves the polyprotein at dibasic sites in the cytoplasm: C-prM, NS2A-NS2B, NS2B-NS3, NS3-NS4A, NS4A-2K and NS4B-NS5. NS3 RNA helicase binds RNA and unwinds dsRNA in the 3' to 5' direction. In terms of biological role, regulates the ATPase activity of the NS3 helicase activity. NS4A allows NS3 helicase to conserve energy during unwinding. Its function is as follows. Functions as a signal peptide for NS4B and is required for the interferon antagonism activity of the latter. Induces the formation of ER-derived membrane vesicles where the viral replication takes place. Inhibits interferon (IFN)-induced host STAT1 phosphorylation and nuclear translocation, thereby preventing the establishment of cellular antiviral state by blocking the IFN-alpha/beta pathway. Inhibits STAT2 translocation in the nucleus after IFN-alpha treatment. Functionally, replicates the viral (+) and (-) RNA genome. Performs the capping of genomes in the cytoplasm. NS5 methylates viral RNA cap at guanine N-7 and ribose 2'-O positions. Besides its role in RNA genome replication, also prevents the establishment of cellular antiviral state by blocking the interferon-alpha/beta (IFN-alpha/beta) signaling pathway. Inhibits host TYK2 and STAT2 phosphorylation, thereby preventing activation of JAK-STAT signaling pathway. The sequence is that of Genome polyprotein from Japanese encephalitis virus (strain SA-14) (JEV).